Consider the following 110-residue polypeptide: Large ribosomal subunit protein uL22 (110 aa).

It belongs to the universal ribosomal protein uL22 family. As to quaternary structure, part of the 50S ribosomal subunit.

This protein binds specifically to 23S rRNA; its binding is stimulated by other ribosomal proteins, e.g. L4, L17, and L20. It is important during the early stages of 50S assembly. It makes multiple contacts with different domains of the 23S rRNA in the assembled 50S subunit and ribosome. Functionally, the globular domain of the protein is located near the polypeptide exit tunnel on the outside of the subunit, while an extended beta-hairpin is found that lines the wall of the exit tunnel in the center of the 70S ribosome. The chain is Large ribosomal subunit protein uL22 from Pectobacterium atrosepticum (strain SCRI 1043 / ATCC BAA-672) (Erwinia carotovora subsp. atroseptica).